We begin with the raw amino-acid sequence, 595 residues long: uncharacterized protein (595 aa).

Residues 112–180 (VRPPGYDPES…KDVFGRALPT (69 aa)) form a disordered region. Composition is skewed to basic and acidic residues over residues 120–133 (ESAK…EKHK) and 161–174 (RTQE…KDVF). A CCHC-type; degenerate zinc finger spans residues 211–228 (VKCLRCGNFGHQSGDRDC). Disordered regions lie at residues 254-290 (HTDP…IVAE) and 310-595 (KSMS…RRRN). A compositionally biased stretch (basic and acidic residues) spans 256–267 (DPSEPLKWELKQ). Composition is skewed to basic residues over residues 316–331 (KKRK…KHSS) and 351–364 (RGSK…KKSK). Composition is skewed to basic and acidic residues over residues 414–428 (HYYD…EIVD), 470–539 (VSEK…HVYE), and 547–565 (FSDR…ESNR). Over residues 584 to 595 (RKHRYSTNRRRN) the composition is skewed to basic residues.

This is an uncharacterized protein from Arabidopsis thaliana (Mouse-ear cress).